A 484-amino-acid polypeptide reads, in one-letter code: Cobyric acid synthase (484 aa).

The 188-residue stretch at 251–438 (ALKIAVPVLP…LHGLFASDAY (188 aa)) folds into the GATase cobBQ-type domain. The active-site Nucleophile is the Cys-333. The active site involves His-430.

It belongs to the CobB/CobQ family. CobQ subfamily.

The protein operates within cofactor biosynthesis; adenosylcobalamin biosynthesis. Functionally, catalyzes amidations at positions B, D, E, and G on adenosylcobyrinic A,C-diamide. NH(2) groups are provided by glutamine, and one molecule of ATP is hydrogenolyzed for each amidation. The sequence is that of Cobyric acid synthase from Rhizobium etli (strain CIAT 652).